We begin with the raw amino-acid sequence, 4684 residues long: Plectin (4684 aa).

The interval 1 to 1470 (MVAGMLMPRD…SELTTLTSQY (1470 aa)) is globular 1. Residues phenylalanine 20 and arginine 21 each carry the phosphoserine modification. The residue at position 26 (valine 26) is a Phosphotyrosine. Residue glycine 42 is modified to Phosphoserine. Residue threonine 113 is modified to Phosphothreonine. Residues serine 125 and serine 149 each carry the phosphoserine modification. A disordered region spans residues 144–179 (ELEEVSPETPVVPATTQRTLARPGPEPAPATDERDR). The actin-binding stretch occupies residues 175–400 (DERDRVQKKT…YVSSLYDAMP (226 aa)). Calponin-homology (CH) domains lie at 179-282 (RVQK…LHFQ) and 295-400 (MTAK…DAMP). A Spectrin 1 repeat occupies 645–710 (LQSVQRRPEL…SIEEFRAKIE (66 aa)). Serine 720 is modified (phosphoserine). Spectrin repeat units follow at residues 740-824 (KLLN…REDH) and 837-930 (LQTQ…AVVQ). One can recognise an SH3 domain in the interval 941–998 (RGRLPLLAVCDYKQVEVTVHKGDECQLVGPAQPSHWKVLSSSGSEAAVPSVCFLVPPP). A required for interaction with intermediate filament proteins region spans residues 964–4574 (ECQLVGPAQP…VGAYSKYLTC (3611 aa)). Residue serine 1047 is modified to Phosphoserine. Residues 1315–1415 (RERVAQLLER…QRFAKQYINA (101 aa)) form a Spectrin 4 repeat. The residue at position 1435 (serine 1435) is a Phosphoserine. Residues 1469–2756 (QYIKFISETL…AHSEEVTASQ (1288 aa)) adopt a coiled-coil conformation. A central fibrous rod domain region spans residues 1471–2755 (IKFISETLRR…LAHSEEVTAS (1285 aa)). Positions 1618-1650 (RAEEAEAQKRQAQEEAERLRRQVQDESQRKRQA) are disordered. Serine 1721 is subject to Phosphoserine. Lysine 1725 is modified (N6-acetyllysine). Serine 1732 bears the Phosphoserine mark. Disordered regions lie at residues 1794 to 1836 (LAQA…KQRQ), 2105 to 2139 (EAAR…EAAR), and 2217 to 2307 (RGEA…MEKH). Basic and acidic residues-rich tracts occupy residues 1798 to 1836 (EAEK…KQRQ), 2105 to 2128 (EAAR…ERVQ), and 2217 to 2258 (RGEA…KQSA). The segment covering 2259 to 2272 (EEQAQARAQAQAAA) has biased composition (low complexity). The segment covering 2273–2288 (EKLRKEAEQEAARRAQ) has biased composition (basic and acidic residues). Serine 2631 bears the Phosphoserine mark. Position 2636 is an N6-acetyllysine (lysine 2636). Disordered stretches follow at residues 2668 to 2707 (REEQ…RRKQ) and 2763 to 2784 (LPNG…HSFD). Basic and acidic residues predominate over residues 2679–2707 (EQERQRLVASMEEARRRQHEAEEGVRRKQ). The tract at residues 2756–4684 (QVAATKTLPN…SLGGPESAVA (1929 aa)) is globular 2. A phosphoserine mark is found at serine 2782 and serine 2802. 5 Plectin repeats span residues 2826-2863 (RHYL…PGTA), 2864-2901 (LILL…PELH), 2902-2939 (HKLL…REHG), 2940-2977 (IRLL…EEMN), and 2981-3015 (ADPS…PETG). Residue threonine 2886 is modified to Phosphothreonine. A Phosphotyrosine modification is found at tyrosine 3033. At serine 3036 the chain carries Phosphoserine. Residues lysine 3053 and lysine 3091 each carry the N6-acetyllysine modification. Plectin repeat units follow at residues 3116 to 3153 (SLVP…VDTV), 3154 to 3191 (RRAL…SDMA), 3192 to 3229 (VALL…PEFH), 3230 to 3267 (EKLL…REQG), 3268 to 3305 (LRLL…EETS), and 3306 to 3343 (RALS…QLTG). The interval 3310 to 3331 (APRADAKAYSDPSTGEPATYGE) is disordered. Tyrosine 3362 is subject to Phosphotyrosine. Residue lysine 3420 is modified to N6-acetyllysine. 5 Plectin repeats span residues 3485–3522 (RTLL…ATTA), 3523–3560 (ALLL…PELH), 3561–3598 (EQLL…RQHG), 3599–3636 (IRLL…EEMN), and 3640–3674 (ADPS…PETG). Serine 3580 bears the Phosphoserine mark. A Phosphothreonine modification is found at threonine 3785. Plectin repeat units lie at residues 3820–3857 (WCYL…AEVA), 3858–3895 (RLLL…PELH), 3896–3933 (DRLL…TEEA), 3934–3971 (LRLL…KDTH), and 3975–4008 (SEPS…DGTG). Positions 3956–4293 (PLEVAYQRGY…ETGKEMSVYE (338 aa)) are required for interaction with type2 keratins, DES and VIM. Threonine 4030 carries the phosphothreonine modification. Position 4054 is a phosphoserine (serine 4054). Plectin repeat units follow at residues 4063–4100 (QKFL…PGTA), 4101–4138 (FELL…PEFK), 4139–4176 (DKLL…KDHG), 4177–4214 (IRLL…EEMN), 4218–4252 (TDPS…PQTG), 4265–4305 (RKTS…HQTY), and 4319–4356 (TISS…RSAL). A binding to intermediate filaments region spans residues 4250 to 4300 (QTGLCLLPLKEKKRERKTSSKSSVRKRRVVIVDPETGKEMSVYEAYRKGLI). Phosphoserine is present on residues serine 4382, serine 4384, serine 4385, serine 4386, serine 4389, serine 4390, serine 4391, and serine 4392. Tyrosine 4393 bears the Phosphotyrosine mark. A phosphoserine mark is found at serine 4396, serine 4400, and serine 4406. Plectin repeat units lie at residues 4408-4445 (SDPT…NITG), 4446-4483 (QRLL…KIMV), 4484-4521 (DRIN…YEAG), 4522-4559 (QRFL…ARTA), and 4560-4597 (QKLR…EGTG). Threonine 4411 is modified (phosphothreonine). The segment at 4505–4574 (MSAAQALKKG…VGAYSKYLTC (70 aa)) is required for efficient interaction with KRT5 and KRT14 heterodimers. Threonine 4539 carries the phosphothreonine; by CDK1 modification. Phosphoserine occurs at positions 4607 and 4613. Residues 4611–4678 (YYSPYSVSGS…ASGSSASLGG (68 aa)) show a composition bias toward low complexity. The disordered stretch occupies residues 4611 to 4684 (YYSPYSVSGS…SLGGPESAVA (74 aa)). Tyrosine 4615 is modified (phosphotyrosine). Phosphoserine is present on residues serine 4616, serine 4618, and serine 4622. Position 4623 is a phosphothreonine (threonine 4623). The tract at residues 4625 to 4640 (GSRTGSRTGSRAGSRR) is 4 X 4 AA tandem repeats of G-S-R-X. Serine 4626 bears the Phosphoserine mark. An omega-N-methylarginine mark is found at arginine 4627 and arginine 4640. Residues serine 4642, serine 4672, and serine 4675 each carry the phosphoserine modification.

This sequence belongs to the plakin or cytolinker family. As to quaternary structure, homodimer or homotetramer. Interacts (via actin-binding domain) with SYNE3. Interacts (via calponin-homology (CH) 1 domain) with VIM (via rod region). Interacts (via N-terminus) with DST isoform 2 (via N-terminus). Interacts with FER. Interacts with TOR1A. Interacts with ANK3. Identified in complexes that contain VIM, EZR, AHNAK, BFSP1, BFSP2, ANK2, PLEC, PRX and spectrin. Interacts with COL17A1. Interacts with KRT14, heterodimers consisting of KRT8 and KRT18, heterodimers consisting of KRT5 and KRT14, heterodimers consisting of KRT14 and KRT15, and heterodimers consisting of KRT1 and KRT10. Interacts with DES and VIM. In terms of processing, phosphorylated by CDK1; regulates dissociation from intermediate filaments during mitosis. Widely expressed with highest levels in muscle, heart, placenta and spinal cord.

Its subcellular location is the cytoplasm. It is found in the cytoskeleton. It localises to the cell junction. The protein resides in the hemidesmosome. The protein localises to the cell projection. Its subcellular location is the podosome. In terms of biological role, interlinks intermediate filaments with microtubules and microfilaments and anchors intermediate filaments to desmosomes or hemidesmosomes. Could also bind muscle proteins such as actin to membrane complexes in muscle. May be involved not only in the filaments network, but also in the regulation of their dynamics. Structural component of muscle. Isoform 9 plays a major role in the maintenance of myofiber integrity. The chain is Plectin (PLEC) from Homo sapiens (Human).